The primary structure comprises 239 residues: Pyridoxine 5'-phosphate synthase (239 aa).

Residue N7 participates in 3-amino-2-oxopropyl phosphate binding. Residue 9–10 (DH) participates in 1-deoxy-D-xylulose 5-phosphate binding. R18 contacts 3-amino-2-oxopropyl phosphate. Catalysis depends on H43, which acts as the Proton acceptor. 1-deoxy-D-xylulose 5-phosphate contacts are provided by R45 and H50. Residue E70 is the Proton acceptor of the active site. T100 serves as a coordination point for 1-deoxy-D-xylulose 5-phosphate. Catalysis depends on H191, which acts as the Proton donor. Residues G192 and 213-214 (GH) contribute to the 3-amino-2-oxopropyl phosphate site.

The protein belongs to the PNP synthase family. In terms of assembly, homooctamer; tetramer of dimers.

It is found in the cytoplasm. The catalysed reaction is 3-amino-2-oxopropyl phosphate + 1-deoxy-D-xylulose 5-phosphate = pyridoxine 5'-phosphate + phosphate + 2 H2O + H(+). It functions in the pathway cofactor biosynthesis; pyridoxine 5'-phosphate biosynthesis; pyridoxine 5'-phosphate from D-erythrose 4-phosphate: step 5/5. Its function is as follows. Catalyzes the complicated ring closure reaction between the two acyclic compounds 1-deoxy-D-xylulose-5-phosphate (DXP) and 3-amino-2-oxopropyl phosphate (1-amino-acetone-3-phosphate or AAP) to form pyridoxine 5'-phosphate (PNP) and inorganic phosphate. The sequence is that of Pyridoxine 5'-phosphate synthase from Geotalea uraniireducens (strain Rf4) (Geobacter uraniireducens).